A 100-amino-acid polypeptide reads, in one-letter code: Non-histone chromosomal protein HMG-14 (100 aa).

The segment at 1-100 (MPKRKVSSAE…EAGEKEAKSD (100 aa)) is disordered. ADP-ribosylserine is present on serine 7. Serine 8 bears the Phosphoserine mark. Lysine 14 carries the N6-acetyllysine modification. At serine 21 the chain carries Phosphoserine; by RPS6KA5. An ADP-ribosylserine; alternate modification is found at serine 25. Phosphoserine; alternate; by RPS6KA5 is present on serine 25. N6-acetyllysine is present on lysine 27. Basic and acidic residues-rich tracts occupy residues 30 to 50 (AKVE…DKKV) and 69 to 85 (ETKE…KTEE). Threonine 81 carries the phosphothreonine modification. An N6-acetyllysine modification is found at lysine 82. 3 positions are modified to phosphoserine: serine 86, serine 89, and serine 99.

Interacts with transcriptional regulator SEHBP. Phosphorylation on Ser-21 and Ser-25 weakens binding to nucleosomes and increases the rate of H3 phosphorylation. Phosphorylation favors cytoplasmic localization.

The protein resides in the nucleus. Its subcellular location is the cytoplasm. Functionally, binds to the inner side of the nucleosomal DNA thus altering the interaction between the DNA and the histone octamer. May be involved in the process which maintains transcribable genes in a unique chromatin conformation. Inhibits the phosphorylation of nucleosomal histones H3 and H2A by RPS6KA5/MSK1 and RPS6KA3/RSK2. The polypeptide is Non-histone chromosomal protein HMG-14 (HMGN1) (Homo sapiens (Human)).